The sequence spans 252 residues: tRNA (guanine-N(1)-)-methyltransferase (252 aa).

S-adenosyl-L-methionine-binding positions include Gly-118 and 138 to 143 (IGDYVL).

It belongs to the RNA methyltransferase TrmD family. In terms of assembly, homodimer.

The protein resides in the cytoplasm. It carries out the reaction guanosine(37) in tRNA + S-adenosyl-L-methionine = N(1)-methylguanosine(37) in tRNA + S-adenosyl-L-homocysteine + H(+). Its function is as follows. Specifically methylates guanosine-37 in various tRNAs. This Pseudomonas aeruginosa (strain UCBPP-PA14) protein is tRNA (guanine-N(1)-)-methyltransferase.